The following is a 577-amino-acid chain: MNIQALLSEKVSQAMIAAGAPADCEPQVRQSAKVQFGDYQANGMMAVAKKLGMAPRQLAEQVLTHLDLSGIASKVEIAGPGFINIFLEPAFLAEQVQQALTSDRLGVSQPTRQTIVVDYSAPNVAKEMHVGHLRSTIIGDAAVRTLEFLGHHVIRANHVGDWGTQFGMLIAWLEKQQQENAGDMALADLEGFYRDAKKHYDEDEAFAERARNYVVKLQSGDTYFREMWRKLVDITMTQNQITYDRLNVTLTRDDVMGESLYNPMLPGIVADLKAKGLAVESEGATVVFLDEFKNKEGDPMGVIIQKKDGGYLYTTTDIACAKYRYETLHADRVLYYIDSRQHQHLMQAWTIVRKAGYVPDSVPLEHHMFGMMLGKDGKPFKTRAGGTVKLADLLDEALERARRLVAEKNPDMSADELEKLANAVGIGAVKYADLSKNRTTDYIFDWDNMLAFEGNTAPYMQYAYTRVLSVFRKADIDEQALASAPVIISEDREAQLAARLLQFEETLTVVAREGTPHVMCAYLYDVAGLFSGFYEHCPILSAENDAVRNSRLKLAQLTAKTLKLGLDTLGIETVERM.

A 'HIGH' region motif is present at residues 122–132 (PNVAKEMHVGH).

The protein belongs to the class-I aminoacyl-tRNA synthetase family. Monomer.

The protein resides in the cytoplasm. It carries out the reaction tRNA(Arg) + L-arginine + ATP = L-arginyl-tRNA(Arg) + AMP + diphosphate. This chain is Arginine--tRNA ligase, found in Salmonella enteritidis PT4 (strain P125109).